Consider the following 215-residue polypeptide: Myelin protein zero-like protein 2 (215 aa).

The first 26 residues, 1–26 (MYGKSSTRAVLLLLGIQLTALWPIAA), serve as a signal peptide directing secretion. An Ig-like V-type domain is found at 27 to 141 (VEIYTSRVLE…DGVIGEIRLS (115 aa)). At 27–154 (VEIYTSRVLE…TVRFSEIHFL (128 aa)) the chain is on the extracellular side. N-linked (GlcNAc...) asparagine glycosylation is found at N39 and N118. Residues C47 and C123 are joined by a disulfide bond. The chain crosses the membrane as a helical span at residues 155-175 (ALAIGSACALMIIIVIVVVLF). The Cytoplasmic portion of the chain corresponds to 176–215 (QHYRKKRWAERAHKVVEIKSKEEERLNQEKKVSVYLEDTD).

The protein belongs to the myelin P0 protein family. As to expression, widely expressed. In fetal tissues, highest expression in the inner ear. In adult tissues, highest levels in thymus and lung.

The protein localises to the membrane. Functionally, mediates homophilic cell-cell adhesion. The protein is Myelin protein zero-like protein 2 (MPZL2) of Homo sapiens (Human).